A 122-amino-acid chain; its full sequence is Large ribosomal subunit protein uL14 (122 aa).

This sequence belongs to the universal ribosomal protein uL14 family. Part of the 50S ribosomal subunit. Forms a cluster with proteins L3 and L19. In the 70S ribosome, L14 and L19 interact and together make contacts with the 16S rRNA in bridges B5 and B8.

Functionally, binds to 23S rRNA. Forms part of two intersubunit bridges in the 70S ribosome. The chain is Large ribosomal subunit protein uL14 from Caulobacter sp. (strain K31).